We begin with the raw amino-acid sequence, 285 residues long: MEMO1 family protein Igni_0992 (285 aa).

Belongs to the MEMO1 family.

This is MEMO1 family protein Igni_0992 from Ignicoccus hospitalis (strain KIN4/I / DSM 18386 / JCM 14125).